A 418-amino-acid polypeptide reads, in one-letter code: Gamma-glutamyl phosphate reductase (418 aa).

This sequence belongs to the gamma-glutamyl phosphate reductase family.

It localises to the cytoplasm. It catalyses the reaction L-glutamate 5-semialdehyde + phosphate + NADP(+) = L-glutamyl 5-phosphate + NADPH + H(+). It participates in amino-acid biosynthesis; L-proline biosynthesis; L-glutamate 5-semialdehyde from L-glutamate: step 2/2. Functionally, catalyzes the NADPH-dependent reduction of L-glutamate 5-phosphate into L-glutamate 5-semialdehyde and phosphate. The product spontaneously undergoes cyclization to form 1-pyrroline-5-carboxylate. The polypeptide is Gamma-glutamyl phosphate reductase (Trichlorobacter lovleyi (strain ATCC BAA-1151 / DSM 17278 / SZ) (Geobacter lovleyi)).